Here is a 906-residue protein sequence, read N- to C-terminus: Protein translocase subunit SecA (906 aa).

Residues Gln-87, 105 to 109, and Asp-512 contribute to the ATP site; that span reads GEGKT. Residues 875–897 form a disordered region; the sequence is VTFVRDEQKVGRNDPCPCGSGKK. Zn(2+) is bound by residues Cys-890, Cys-892, Cys-901, and His-902.

This sequence belongs to the SecA family. As to quaternary structure, monomer and homodimer. Part of the essential Sec protein translocation apparatus which comprises SecA, SecYEG and auxiliary proteins SecDF-YajC and YidC. Zn(2+) serves as cofactor.

The protein resides in the cell inner membrane. The protein localises to the cytoplasm. The catalysed reaction is ATP + H2O + cellular proteinSide 1 = ADP + phosphate + cellular proteinSide 2.. Its function is as follows. Part of the Sec protein translocase complex. Interacts with the SecYEG preprotein conducting channel. Has a central role in coupling the hydrolysis of ATP to the transfer of proteins into and across the cell membrane, serving both as a receptor for the preprotein-SecB complex and as an ATP-driven molecular motor driving the stepwise translocation of polypeptide chains across the membrane. The polypeptide is Protein translocase subunit SecA (Aeromonas hydrophila subsp. hydrophila (strain ATCC 7966 / DSM 30187 / BCRC 13018 / CCUG 14551 / JCM 1027 / KCTC 2358 / NCIMB 9240 / NCTC 8049)).